The chain runs to 498 residues: Argininosuccinate lyase 1 (498 aa).

Belongs to the lyase 1 family. Argininosuccinate lyase subfamily.

Its subcellular location is the cytoplasm. It catalyses the reaction 2-(N(omega)-L-arginino)succinate = fumarate + L-arginine. Its pathway is amino-acid biosynthesis; L-arginine biosynthesis; L-arginine from L-ornithine and carbamoyl phosphate: step 3/3. This Shouchella clausii (strain KSM-K16) (Alkalihalobacillus clausii) protein is Argininosuccinate lyase 1.